The chain runs to 172 residues: Ribosome maturation factor RimP (172 aa).

This sequence belongs to the RimP family.

It localises to the cytoplasm. In terms of biological role, required for maturation of 30S ribosomal subunits. The sequence is that of Ribosome maturation factor RimP from Chlorobium phaeovibrioides (strain DSM 265 / 1930) (Prosthecochloris vibrioformis (strain DSM 265)).